Reading from the N-terminus, the 273-residue chain is 2,3,4,5-tetrahydropyridine-2,6-dicarboxylate N-succinyltransferase (273 aa).

It belongs to the transferase hexapeptide repeat family.

It is found in the cytoplasm. It carries out the reaction (S)-2,3,4,5-tetrahydrodipicolinate + succinyl-CoA + H2O = (S)-2-succinylamino-6-oxoheptanedioate + CoA. The protein operates within amino-acid biosynthesis; L-lysine biosynthesis via DAP pathway; LL-2,6-diaminopimelate from (S)-tetrahydrodipicolinate (succinylase route): step 1/3. The protein is 2,3,4,5-tetrahydropyridine-2,6-dicarboxylate N-succinyltransferase of Acinetobacter baumannii (strain AB307-0294).